The following is a 347-amino-acid chain: NADH-ubiquinone oxidoreductase chain 2 (347 aa).

Transmembrane regions (helical) follow at residues 5-22 (ILAI…MVLI), 26-45 (WLTI…PILM), 60-80 (FLTQ…NLLL), 150-170 (NPNL…WGGL), 178-198 (ILAY…TYNP), 200-220 (LMLL…MLFM), 237-257 (LPLI…LPPL), 274-294 (DMAI…YFYM), and 327-347 (PPLI…LTLF).

Belongs to the complex I subunit 2 family. As to quaternary structure, core subunit of respiratory chain NADH dehydrogenase (Complex I) which is composed of 45 different subunits. Interacts with TMEM242.

It is found in the mitochondrion inner membrane. The catalysed reaction is a ubiquinone + NADH + 5 H(+)(in) = a ubiquinol + NAD(+) + 4 H(+)(out). Core subunit of the mitochondrial membrane respiratory chain NADH dehydrogenase (Complex I) which catalyzes electron transfer from NADH through the respiratory chain, using ubiquinone as an electron acceptor. Essential for the catalytic activity and assembly of complex I. The polypeptide is NADH-ubiquinone oxidoreductase chain 2 (Martes zibellina (Sable)).